Reading from the N-terminus, the 440-residue chain is Thymidine phosphorylase (440 aa).

Belongs to the thymidine/pyrimidine-nucleoside phosphorylase family. In terms of assembly, homodimer.

It carries out the reaction thymidine + phosphate = 2-deoxy-alpha-D-ribose 1-phosphate + thymine. It participates in pyrimidine metabolism; dTMP biosynthesis via salvage pathway; dTMP from thymine: step 1/2. In terms of biological role, the enzymes which catalyze the reversible phosphorolysis of pyrimidine nucleosides are involved in the degradation of these compounds and in their utilization as carbon and energy sources, or in the rescue of pyrimidine bases for nucleotide synthesis. The chain is Thymidine phosphorylase from Salmonella dublin (strain CT_02021853).